The primary structure comprises 606 residues: Aspartate--tRNA(Asp/Asn) ligase (606 aa).

Glu-175 serves as a coordination point for L-aspartate. Positions 199 to 202 (QLFK) are aspartate. Arg-221 contributes to the L-aspartate binding site. ATP contacts are provided by residues 221–223 (RDE) and Gln-230. His-453 serves as a coordination point for L-aspartate. Glu-487 contacts ATP. Arg-494 provides a ligand contact to L-aspartate. Position 539-542 (539-542 (GWDR)) interacts with ATP. The segment at 564–606 (GGVDPLTDAPGTIPAEQRKETGVDFKPEKAAKAAQGEKAGKES) is disordered. The span at 579–594 (EQRKETGVDFKPEKAA) shows a compositional bias: basic and acidic residues.

It belongs to the class-II aminoacyl-tRNA synthetase family. Type 1 subfamily. In terms of assembly, homodimer.

Its subcellular location is the cytoplasm. It carries out the reaction tRNA(Asx) + L-aspartate + ATP = L-aspartyl-tRNA(Asx) + AMP + diphosphate. In terms of biological role, aspartyl-tRNA synthetase with relaxed tRNA specificity since it is able to aspartylate not only its cognate tRNA(Asp) but also tRNA(Asn). Reaction proceeds in two steps: L-aspartate is first activated by ATP to form Asp-AMP and then transferred to the acceptor end of tRNA(Asp/Asn). The sequence is that of Aspartate--tRNA(Asp/Asn) ligase from Corynebacterium aurimucosum (strain ATCC 700975 / DSM 44827 / CIP 107346 / CN-1) (Corynebacterium nigricans).